We begin with the raw amino-acid sequence, 1399 residues long: DNA-directed RNA polymerase subunit beta' (1399 aa).

Zn(2+) is bound by residues Cys71, Cys73, Cys86, and Cys89. The Mg(2+) site is built by Asp462, Asp464, and Asp466. 4 residues coordinate Zn(2+): Cys810, Cys884, Cys891, and Cys894. Positions 1379–1399 are disordered; it reads KQAAIVPSQPEPQPLALPPAE. Residues 1387–1399 are compositionally biased toward pro residues; it reads QPEPQPLALPPAE.

It belongs to the RNA polymerase beta' chain family. In terms of assembly, the RNAP catalytic core consists of 2 alpha, 1 beta, 1 beta' and 1 omega subunit. When a sigma factor is associated with the core the holoenzyme is formed, which can initiate transcription. Requires Mg(2+) as cofactor. It depends on Zn(2+) as a cofactor.

The enzyme catalyses RNA(n) + a ribonucleoside 5'-triphosphate = RNA(n+1) + diphosphate. In terms of biological role, DNA-dependent RNA polymerase catalyzes the transcription of DNA into RNA using the four ribonucleoside triphosphates as substrates. The sequence is that of DNA-directed RNA polymerase subunit beta' from Bradyrhizobium sp. (strain ORS 278).